Here is a 268-residue protein sequence, read N- to C-terminus: Ribosomal RNA small subunit methyltransferase A (268 aa).

S-adenosyl-L-methionine is bound by residues Asn-16, Leu-18, Gly-43, Glu-64, Asp-89, and Asn-110.

Belongs to the class I-like SAM-binding methyltransferase superfamily. rRNA adenine N(6)-methyltransferase family. RsmA subfamily.

Its subcellular location is the cytoplasm. It catalyses the reaction adenosine(1518)/adenosine(1519) in 16S rRNA + 4 S-adenosyl-L-methionine = N(6)-dimethyladenosine(1518)/N(6)-dimethyladenosine(1519) in 16S rRNA + 4 S-adenosyl-L-homocysteine + 4 H(+). Its function is as follows. Specifically dimethylates two adjacent adenosines (A1518 and A1519) in the loop of a conserved hairpin near the 3'-end of 16S rRNA in the 30S particle. May play a critical role in biogenesis of 30S subunits. In Pseudomonas aeruginosa (strain ATCC 15692 / DSM 22644 / CIP 104116 / JCM 14847 / LMG 12228 / 1C / PRS 101 / PAO1), this protein is Ribosomal RNA small subunit methyltransferase A.